A 280-amino-acid polypeptide reads, in one-letter code: 4-diphosphocytidyl-2-C-methyl-D-erythritol kinase (280 aa).

Lys-8 is an active-site residue. 91–101 (PVAAGLAGGST) provides a ligand contact to ATP. The active site involves Asp-133.

It belongs to the GHMP kinase family. IspE subfamily.

The catalysed reaction is 4-CDP-2-C-methyl-D-erythritol + ATP = 4-CDP-2-C-methyl-D-erythritol 2-phosphate + ADP + H(+). It functions in the pathway isoprenoid biosynthesis; isopentenyl diphosphate biosynthesis via DXP pathway; isopentenyl diphosphate from 1-deoxy-D-xylulose 5-phosphate: step 3/6. Catalyzes the phosphorylation of the position 2 hydroxy group of 4-diphosphocytidyl-2C-methyl-D-erythritol. The chain is 4-diphosphocytidyl-2-C-methyl-D-erythritol kinase from Clostridium botulinum (strain Loch Maree / Type A3).